Consider the following 184-residue polypeptide: Ribosome-recycling factor (184 aa).

Residues lysine 141 to lysine 161 form a disordered region.

Belongs to the RRF family.

The protein localises to the cytoplasm. Its function is as follows. Responsible for the release of ribosomes from messenger RNA at the termination of protein biosynthesis. May increase the efficiency of translation by recycling ribosomes from one round of translation to another. This Solidesulfovibrio magneticus (strain ATCC 700980 / DSM 13731 / RS-1) (Desulfovibrio magneticus) protein is Ribosome-recycling factor.